The chain runs to 247 residues: Geranylgeranylglyceryl phosphate synthase (247 aa).

The Mg(2+) site is built by Asp-23 and Ser-52. Sn-glycerol 1-phosphate contacts are provided by residues 171 to 177, 203 to 204, and 225 to 226; these read YLEAGSG, GG, and GT.

The protein belongs to the GGGP/HepGP synthase family. Group II subfamily. The cofactor is Mg(2+).

It is found in the cytoplasm. The enzyme catalyses sn-glycerol 1-phosphate + (2E,6E,10E)-geranylgeranyl diphosphate = sn-3-O-(geranylgeranyl)glycerol 1-phosphate + diphosphate. The protein operates within membrane lipid metabolism; glycerophospholipid metabolism. Functionally, prenyltransferase that catalyzes the transfer of the geranylgeranyl moiety of geranylgeranyl diphosphate (GGPP) to the C3 hydroxyl of sn-glycerol-1-phosphate (G1P). This reaction is the first ether-bond-formation step in the biosynthesis of archaeal membrane lipids. In Methanosarcina barkeri (strain Fusaro / DSM 804), this protein is Geranylgeranylglyceryl phosphate synthase.